We begin with the raw amino-acid sequence, 473 residues long: MAAKVLLVEDDRALREALSDTLLLGGHEFVAVDSAEAALPVLAREAFSLVISDVNMPGMDGHQLLGLIRTRYPHLPVLLMTAYGAVDRAVEAMRQGAADYLVKPFEARALLDLVARHALGQLPGSEEDGPVALEPASRQLLELAARVARSDSTVLISGESGTGKEVLANYIHQQSPRAGKPFIAINCAAIPDNMLEATLFGHEKGSFTGAIAAQPGKFELADGGTILLDEISEMPLGLQAKLLRVLQEREVERVGARKPINLDIRVLATTNRDLAAEVAAGRFREDLYYRLSVFPLAWRPLRERPADILPLAERLLRKHSRKMNLGAVALGPEAAQCLVRHAWPGNVRELDNAIQRALILQQGGLIQPADLCLTAPIGMPLAAPVPVPMPAMPPATPPSVEIPSPAAGQDASGALGDDLRRREFQVIIDTLRTERGRRKEAAERLGISPRTLRYKLAQMRDAGMDVEAYLYAI.

The Response regulatory domain occupies 4-118 (KVLLVEDDRA…ALLDLVARHA (115 aa)). Aspartate 53 carries the post-translational modification 4-aspartylphosphate. The region spanning 130 to 359 (PVALEPASRQ…LDNAIQRALI (230 aa)) is the Sigma-54 factor interaction domain. ATP is bound by residues 158–165 (GESGTGKE) and 221–230 (ADGGTILLDE).

In terms of biological role, member of the two-component regulatory system FleS/FleR that regulates the expression of multiple genes involved in flagellar synthesis, adhesion, swarming, motility and antibiotic resistance. May function as a transcriptional activator by direct binding to a cis-acting sequence upstream of the target genes. This Pseudomonas aeruginosa (strain ATCC 15692 / DSM 22644 / CIP 104116 / JCM 14847 / LMG 12228 / 1C / PRS 101 / PAO1) protein is Response regulator protein FleR.